The following is a 130-amino-acid chain: Small ribosomal subunit protein uS8 (130 aa).

Belongs to the universal ribosomal protein uS8 family. Part of the 30S ribosomal subunit. Contacts proteins S5 and S12.

Its function is as follows. One of the primary rRNA binding proteins, it binds directly to 16S rRNA central domain where it helps coordinate assembly of the platform of the 30S subunit. The chain is Small ribosomal subunit protein uS8 from Glaesserella parasuis serovar 5 (strain SH0165) (Haemophilus parasuis).